The chain runs to 319 residues: Pantothenate kinase (319 aa).

97-104 (GSVAVGKS) contributes to the ATP binding site.

Belongs to the prokaryotic pantothenate kinase family.

It localises to the cytoplasm. The catalysed reaction is (R)-pantothenate + ATP = (R)-4'-phosphopantothenate + ADP + H(+). The protein operates within cofactor biosynthesis; coenzyme A biosynthesis; CoA from (R)-pantothenate: step 1/5. This is Pantothenate kinase from Chelativorans sp. (strain BNC1).